Here is a 37-residue protein sequence, read N- to C-terminus: Cytochrome b6-f complex subunit 5 (37 aa).

Residues 5 to 25 (LLCGIVLGLIPITLAGLFMAA) traverse the membrane as a helical segment.

Belongs to the PetG family. As to quaternary structure, the 4 large subunits of the cytochrome b6-f complex are cytochrome b6, subunit IV (17 kDa polypeptide, PetD), cytochrome f and the Rieske protein, while the 4 small subunits are PetG, PetL, PetM and PetN. The complex functions as a dimer.

The protein resides in the cellular thylakoid membrane. Component of the cytochrome b6-f complex, which mediates electron transfer between photosystem II (PSII) and photosystem I (PSI), cyclic electron flow around PSI, and state transitions. PetG is required for either the stability or assembly of the cytochrome b6-f complex. The protein is Cytochrome b6-f complex subunit 5 of Synechococcus elongatus (strain ATCC 33912 / PCC 7942 / FACHB-805) (Anacystis nidulans R2).